The sequence spans 65 residues: Small ribosomal subunit protein bS21 (65 aa).

The protein belongs to the bacterial ribosomal protein bS21 family.

The sequence is that of Small ribosomal subunit protein bS21 from Trichlorobacter lovleyi (strain ATCC BAA-1151 / DSM 17278 / SZ) (Geobacter lovleyi).